Consider the following 24-residue polypeptide: Protein YsdE (24 aa).

This chain is Protein YsdE, found in Escherichia coli (strain K12).